The following is a 269-amino-acid chain: NAD kinase (269 aa).

The active-site Proton acceptor is the D45. Residues 45–46 (DG), 122–123 (NE), R149, D151, and A186 each bind NAD(+).

This sequence belongs to the NAD kinase family. Requires a divalent metal cation as cofactor.

The protein resides in the cytoplasm. It catalyses the reaction NAD(+) + ATP = ADP + NADP(+) + H(+). Its function is as follows. Involved in the regulation of the intracellular balance of NAD and NADP, and is a key enzyme in the biosynthesis of NADP. Catalyzes specifically the phosphorylation on 2'-hydroxyl of the adenosine moiety of NAD to yield NADP. This is NAD kinase from Staphylococcus haemolyticus (strain JCSC1435).